Reading from the N-terminus, the 257-residue chain is Phycoerythrobilin:ferredoxin oxidoreductase (257 aa).

Belongs to the HY2 family.

It carries out the reaction (3Z)-phycoerythrobilin + oxidized 2[4Fe-4S]-[ferredoxin] = 15,16-dihydrobiliverdin + reduced 2[4Fe-4S]-[ferredoxin] + 2 H(+). In terms of biological role, catalyzes the two-electron reduction of the C2 and C3(1) diene system of 15,16-dihydrobiliverdin. This Prochlorococcus marinus (strain MIT 9211) protein is Phycoerythrobilin:ferredoxin oxidoreductase.